Reading from the N-terminus, the 605-residue chain is ATP-dependent RNA helicase dbp9 (605 aa).

A disordered region spans residues 1–30; the sequence is MKRKLDANDVPSPEAADKKEKKEEDDADFE. Residues 15-24 are compositionally biased toward basic and acidic residues; that stretch reads AADKKEKKEE. Positions 27 to 55 match the Q motif motif; that stretch reads ADFESLNLDPRLRQALIKEKFTKPTLVQA. A Helicase ATP-binding domain is found at 58–236; that stretch reads IPLALEGKDI…GLFCRSPVTL (179 aa). Position 71–78 (71–78) interacts with ATP; that stretch reads AKTGSGKT. Residues 184 to 187 carry the DEAD box motif; sequence DEAD. In terms of domain architecture, Helicase C-terminal spans 247-469; it reads GVSQFVVRCA…EVKPYHFEMK (223 aa). Disordered regions lie at residues 339–373 and 564–605; these read ARKS…VSGK and RKQN…RGRK. The segment covering 350-361 has biased composition (acidic residues); that stretch reads EAGSSDEDEGEP. Positions 572–591 are enriched in basic residues; the sequence is RKAREKNRGKGNGRKFAGVK.

It belongs to the DEAD box helicase family. DDX56/DBP9 subfamily.

Its subcellular location is the nucleus. It is found in the nucleolus. The catalysed reaction is ATP + H2O = ADP + phosphate + H(+). ATP-binding RNA helicase involved in the biogenesis of 60S ribosomal subunits and is required for the normal formation of 25S and 5.8S rRNAs. The protein is ATP-dependent RNA helicase dbp9 (dbp9) of Aspergillus oryzae (strain ATCC 42149 / RIB 40) (Yellow koji mold).